The chain runs to 182 residues: RFKKIRRLGALPGLTSKRPRSGSDLKNPLRSGKRSQYRIRLEEKQKLRFHYGLTERQLLRYVHIARKAKGSTGQVLLQLLEMRLDNILFRLGMASTIPGARQLVNHRHILVNGRIVDIPSYRCKPRDIITTKDKQRSKALIQNFIASAPREELPNHLTIDSFQYKGLVNQIIDSKWIGLKIN.

The disordered stretch occupies residues 13–32; sequence GLTSKRPRSGSDLKNPLRSG. Residues 82–143 form the S4 RNA-binding domain; the sequence is MRLDNILFRL…KQRSKALIQN (62 aa).

Belongs to the universal ribosomal protein uS4 family. Part of the 30S ribosomal subunit. Contacts protein S5. The interaction surface between S4 and S5 is involved in control of translational fidelity.

It localises to the plastid. The protein resides in the chloroplast. Its function is as follows. One of the primary rRNA binding proteins, it binds directly to 16S rRNA where it nucleates assembly of the body of the 30S subunit. In terms of biological role, with S5 and S12 plays an important role in translational accuracy. The polypeptide is Small ribosomal subunit protein uS4c (rps4) (Scadoxus puniceus (Paintbrush lily)).